The following is a 298-amino-acid chain: Protease HtpX homolog (298 aa).

The next 2 helical transmembrane spans lie at 14–34 and 39–59; these read VVLL…AGYL and YAMG…SMIF. Position 143 (H143) interacts with Zn(2+). The active site involves E144. H147 is a Zn(2+) binding site. 2 helical membrane-spanning segments follow: residues 158 to 178 and 197 to 217; these read IAVA…RMLW and IITL…ASLI. E226 is a binding site for Zn(2+).

This sequence belongs to the peptidase M48B family. The cofactor is Zn(2+).

It localises to the cell membrane. This is Protease HtpX homolog from Streptococcus pyogenes serotype M1.